Here is a 513-residue protein sequence, read N- to C-terminus: Alpha-amylase mde5 (513 aa).

An N-terminal signal peptide occupies residues 1–25; sequence MKHNEVFGWTLKVLSFLLVVIPANA. C52 and C60 form a disulfide bridge. W105 contacts substrate. N143 is a binding site for Ca(2+). H144 is a binding site for substrate. A glycan (N-linked (GlcNAc...) asparagine) is linked at N162. C171 and C184 are oxidised to a cystine. Residues E182 and D195 each contribute to the Ca(2+) site. R224 serves as a coordination point for substrate. Ca(2+) contacts are provided by D226, H230, and E250. The active-site Nucleophile is the D226. 229–230 serves as a coordination point for substrate; the sequence is KH. Catalysis depends on E250, which acts as the Proton donor. A substrate-binding site is contributed by G254. A disulfide bond links C260 and C304. Residue D318 coordinates substrate. N-linked (GlcNAc...) asparagine glycosylation is present at N357. Position 365 (R365) interacts with substrate. An intrachain disulfide couples C454 to C488.

Belongs to the glycosyl hydrolase 13 family. Ca(2+) serves as cofactor.

The protein resides in the endoplasmic reticulum. The enzyme catalyses Endohydrolysis of (1-&gt;4)-alpha-D-glucosidic linkages in polysaccharides containing three or more (1-&gt;4)-alpha-linked D-glucose units.. The sequence is that of Alpha-amylase mde5 (mde5) from Schizosaccharomyces pombe (strain 972 / ATCC 24843) (Fission yeast).